We begin with the raw amino-acid sequence, 165 residues long: MEDLLVVGQIINTHGLRGEMKVMPLTEDMRRFDYLEYVILKGKKVKVEGVKYFKDKVILKLEGINSIEEAEKLKRTYLEIEREDAIELEEDEYFIVDLVGCTVVDTEGFEYGKIKDVIQTPSNDVYWVQGKKEVLVPVLKDIVLDINMDEKLITIRPSGEWQYED.

The region spanning 90–161 (EDEYFIVDLV…LITIRPSGEW (72 aa)) is the PRC barrel domain.

This sequence belongs to the RimM family. In terms of assembly, binds ribosomal protein uS19.

It is found in the cytoplasm. An accessory protein needed during the final step in the assembly of 30S ribosomal subunit, possibly for assembly of the head region. Essential for efficient processing of 16S rRNA. May be needed both before and after RbfA during the maturation of 16S rRNA. It has affinity for free ribosomal 30S subunits but not for 70S ribosomes. The polypeptide is Ribosome maturation factor RimM (Clostridium perfringens (strain ATCC 13124 / DSM 756 / JCM 1290 / NCIMB 6125 / NCTC 8237 / Type A)).